Here is a 180-residue protein sequence, read N- to C-terminus: Putative 3-methyladenine DNA glycosylase (180 aa).

The protein belongs to the DNA glycosylase MPG family.

The protein is Putative 3-methyladenine DNA glycosylase of Wolbachia pipientis wMel.